Reading from the N-terminus, the 199-residue chain is Ciliary neurotrophic factor (199 aa).

Belongs to the CNTF family. Nervous system.

The protein localises to the cytoplasm. CNTF is a survival factor for various neuronal cell types. Seems to prevent the degeneration of motor axons after axotomy. The sequence is that of Ciliary neurotrophic factor (CNTF) from Oryctolagus cuniculus (Rabbit).